The sequence spans 542 residues: Protein phosphatase 1G (542 aa).

Glycine 2 is lipidated: N-myristoyl glycine. At arginine 22 the chain carries Omega-N-methylarginine. The region spanning 26–502 is the PPM-type phosphatase domain; it reads PYGFSAMQGW…DNMTCIIICF (477 aa). 2 residues coordinate Mn(2+): aspartate 60 and glycine 61. 2 disordered regions span residues 118–139 and 162–325; these read AGRP…DVDN and QNCQ…SDSG. Residue threonine 122 is modified to Phosphothreonine. 2 stretches are compositionally biased toward acidic residues: residues 123–139 and 259–309; these read EDED…DVDN and DSED…DEEM. At lysine 380 the chain carries N6-acetyllysine. Residues aspartate 438 and aspartate 493 each contribute to the Mn(2+) site. Residues 510-542 are disordered; the sequence is LQPESGKRKLEEALSTEGAEENGNSDKKKAKRD. Serine 524 bears the Phosphoserine mark.

Belongs to the PP2C family. In terms of assembly, interacts with NOL3; may dephosphorylate NOL3. Mg(2+) serves as cofactor. The cofactor is Mn(2+).

It localises to the cytoplasm. It is found in the membrane. The catalysed reaction is O-phospho-L-seryl-[protein] + H2O = L-seryl-[protein] + phosphate. It catalyses the reaction O-phospho-L-threonyl-[protein] + H2O = L-threonyl-[protein] + phosphate. The chain is Protein phosphatase 1G from Rattus norvegicus (Rat).